A 368-amino-acid polypeptide reads, in one-letter code: Spermidine/putrescine import ATP-binding protein PotA (368 aa).

One can recognise an ABC transporter domain in the interval 8–238 (IELRGVTKNF…PANLYVARFV (231 aa)). 40-47 (GPSGCGKT) contributes to the ATP binding site.

It belongs to the ABC transporter superfamily. Spermidine/putrescine importer (TC 3.A.1.11.1) family. The complex is composed of two ATP-binding proteins (PotA), two transmembrane proteins (PotB and PotC) and a solute-binding protein (PotD).

It is found in the cell inner membrane. The catalysed reaction is ATP + H2O + polyamine-[polyamine-binding protein]Side 1 = ADP + phosphate + polyamineSide 2 + [polyamine-binding protein]Side 1.. In terms of biological role, part of the ABC transporter complex PotABCD involved in spermidine/putrescine import. Responsible for energy coupling to the transport system. The protein is Spermidine/putrescine import ATP-binding protein PotA of Nitratidesulfovibrio vulgaris (strain ATCC 29579 / DSM 644 / CCUG 34227 / NCIMB 8303 / VKM B-1760 / Hildenborough) (Desulfovibrio vulgaris).